The sequence spans 366 residues: Putative neutrophil cytosol factor 1C (366 aa).

In terms of domain architecture, PX spans 1 to 101 (MYMFLVKWQD…DFFKVRPDDL (101 aa)). 2 consecutive SH3 domains span residues 132 to 191 (IILQ…PLDS) and 202 to 261 (YAGE…KSGQ). Positions 261–366 (QDVSQAQRQI…STKRKLASAV (106 aa)) are disordered. Phosphoserine is present on residues serine 279 and serine 280. Basic residues predominate over residues 285-294 (HSIHQRSRKR). Residues serine 296, serine 304, serine 321, and serine 324 each carry the phosphoserine modification.

The protein localises to the cytoplasm. Its function is as follows. May be required for activation of the latent NADPH oxidase (necessary for superoxide production). The polypeptide is Putative neutrophil cytosol factor 1C (NCF1C) (Homo sapiens (Human)).